A 232-amino-acid polypeptide reads, in one-letter code: Ethylene-responsive transcription factor ERF025 (232 aa).

Residues Met1–Gln29 are compositionally biased toward polar residues. The segment at Met1–Ser63 is disordered. Residues Ser30–Pro50 are compositionally biased toward low complexity. A DNA-binding region (AP2/ERF) is located at residues Ile64–Pro120. The interval Pro213 to Lys232 is disordered.

This sequence belongs to the AP2/ERF transcription factor family. ERF subfamily.

The protein resides in the nucleus. Functionally, probably acts as a transcriptional activator. Binds to the GCC-box pathogenesis-related promoter element. May be involved in the regulation of gene expression by stress factors and by components of stress signal transduction pathways. The protein is Ethylene-responsive transcription factor ERF025 (ERF025) of Arabidopsis thaliana (Mouse-ear cress).